We begin with the raw amino-acid sequence, 59 residues long: Large ribosomal subunit protein bL32 (59 aa).

The disordered stretch occupies residues Met-1–Glu-59. Residues Arg-49–Glu-59 are compositionally biased toward basic residues.

Belongs to the bacterial ribosomal protein bL32 family.

This Neisseria gonorrhoeae (strain ATCC 700825 / FA 1090) protein is Large ribosomal subunit protein bL32.